Reading from the N-terminus, the 266-residue chain is Phosphatidylglycerol--prolipoprotein diacylglyceryl transferase (266 aa).

A run of 7 helical transmembrane segments spans residues 21-41 (LAIR…MWLA), 60-80 (LLFA…VLFY), 95-115 (VWTG…AMLW), 124-144 (FFSV…MGRM), 176-196 (SQLY…NIFI), 203-223 (GAVS…IEYF), and 236-256 (WISM…LLML). Arg143 is an a 1,2-diacyl-sn-glycero-3-phospho-(1'-sn-glycerol) binding site.

The protein belongs to the Lgt family.

The protein localises to the cell inner membrane. The enzyme catalyses L-cysteinyl-[prolipoprotein] + a 1,2-diacyl-sn-glycero-3-phospho-(1'-sn-glycerol) = an S-1,2-diacyl-sn-glyceryl-L-cysteinyl-[prolipoprotein] + sn-glycerol 1-phosphate + H(+). It participates in protein modification; lipoprotein biosynthesis (diacylglyceryl transfer). In terms of biological role, catalyzes the transfer of the diacylglyceryl group from phosphatidylglycerol to the sulfhydryl group of the N-terminal cysteine of a prolipoprotein, the first step in the formation of mature lipoproteins. The sequence is that of Phosphatidylglycerol--prolipoprotein diacylglyceryl transferase from Photobacterium profundum (strain SS9).